A 228-amino-acid chain; its full sequence is Prolactin (228 aa).

An N-terminal signal peptide occupies residues 1 to 29 (MCPKGSSVKGSLLLLLLMSSRFLFKAVES). C33 and C40 are disulfide-bonded. Phosphoserine is present on residues S55, S63, and S119. Intrachain disulfides connect C87–C203 and C220–C228.

It belongs to the somatotropin/prolactin family. In terms of assembly, interacts with PRLR.

The protein localises to the secreted. Its function is as follows. Prolactin acts primarily on the mammary gland by promoting lactation. This chain is Prolactin (PRL), found in Monodelphis domestica (Gray short-tailed opossum).